A 173-amino-acid polypeptide reads, in one-letter code: Large ribosomal subunit protein uL16 (173 aa).

The protein belongs to the universal ribosomal protein uL16 family.

The polypeptide is Large ribosomal subunit protein uL16 (Methanosphaerula palustris (strain ATCC BAA-1556 / DSM 19958 / E1-9c)).